The sequence spans 550 residues: Arginine--tRNA ligase (550 aa).

Residues 123–133 (ANPTGYLHIAH) carry the 'HIGH' region motif.

Belongs to the class-I aminoacyl-tRNA synthetase family. Monomer.

Its subcellular location is the cytoplasm. The catalysed reaction is tRNA(Arg) + L-arginine + ATP = L-arginyl-tRNA(Arg) + AMP + diphosphate. The chain is Arginine--tRNA ligase from Ureaplasma parvum serovar 3 (strain ATCC 27815 / 27 / NCTC 11736).